The primary structure comprises 382 residues: MTEQRPLTIALVAGETSGDILGAGLIRALKERVPNARFVGVAGPRMQAEGCEAWYEMEELAVMGIVEVLGRLRRLLHIRADLTKRFGELKPDVFVGIDAPDFNITLEGNLKKQGVKTIHYVSPSVWAWRQKRVFKIGRATDLVLAFLPFEKAFYDKYNVPCRFIGHTMADAMPLDPDKNGARDVLGIPYDAHCLALLPGSRGAEVEMLSADFLKTAQLLRQTYPDLEIVVPLVNAKRREQFERIKAEVAPDLAVHLLDGMGREAMVASDAALLASGTAALECMLAKCPMVVGYRMKPFTFWLAKRLVKTEYVSLPNLLAGRELVKELLQEECEPQKLAAALLPLLANGKTSHAMHDTFRELHQQIRCNADEQAAQAVLELAQ.

The protein belongs to the LpxB family.

It catalyses the reaction 2-N,3-O-bis[(3R)-3-hydroxytetradecanoyl]-alpha-D-glucosaminyl 1-phosphate + UDP-2-N,3-O-bis[(3R)-3-hydroxytetradecanoyl]-alpha-D-glucosamine = lipid A disaccharide (E. coli) + UDP + H(+). The catalysed reaction is a lipid X + a UDP-2-N,3-O-bis[(3R)-3-hydroxyacyl]-alpha-D-glucosamine = a lipid A disaccharide + UDP + H(+). The protein operates within glycolipid biosynthesis; lipid IV(A) biosynthesis; lipid IV(A) from (3R)-3-hydroxytetradecanoyl-[acyl-carrier-protein] and UDP-N-acetyl-alpha-D-glucosamine: step 5/6. Condensation of UDP-2,3-diacylglucosamine and 2,3-diacylglucosamine-1-phosphate to form lipid A disaccharide, a precursor of lipid A, a phosphorylated glycolipid that anchors the lipopolysaccharide to the outer membrane of the cell. The sequence is that of Lipid-A-disaccharide synthase from Escherichia coli (strain SMS-3-5 / SECEC).